The primary structure comprises 255 residues: Malonyl-[acyl-carrier protein] O-methyltransferase (255 aa).

This sequence belongs to the methyltransferase superfamily.

The enzyme catalyses malonyl-[ACP] + S-adenosyl-L-methionine = malonyl-[ACP] methyl ester + S-adenosyl-L-homocysteine. It functions in the pathway cofactor biosynthesis; biotin biosynthesis. Its function is as follows. Converts the free carboxyl group of a malonyl-thioester to its methyl ester by transfer of a methyl group from S-adenosyl-L-methionine (SAM). It allows to synthesize pimeloyl-ACP via the fatty acid synthetic pathway. This chain is Malonyl-[acyl-carrier protein] O-methyltransferase, found in Porphyromonas gingivalis (strain ATCC BAA-308 / W83).